The primary structure comprises 404 residues: uncharacterized protein (404 aa).

Transmembrane regions (helical) follow at residues 9-29 (IYLI…PYLS), 36-56 (GFGE…FIGL), 76-96 (LVVK…LLFC), 103-123 (IMFY…QLSI), 135-155 (FIQV…LEFY), 162-182 (KRIL…YLIY), 199-219 (AFFY…SFFI), 236-256 (LGLY…ILAI), 288-308 (IVPI…LFFL), 319-339 (IIVF…VNYL), and 366-386 (LIFT…LGIL).

This sequence belongs to the polysaccharide synthase family. HI_0867/HI_1700 subfamily.

The protein resides in the cell membrane. This is an uncharacterized protein from Haemophilus influenzae (strain ATCC 51907 / DSM 11121 / KW20 / Rd).